We begin with the raw amino-acid sequence, 351 residues long: Protein RecA (351 aa).

73–80 (GPESSGKT) contacts ATP.

Belongs to the RecA family.

It is found in the cytoplasm. In terms of biological role, can catalyze the hydrolysis of ATP in the presence of single-stranded DNA, the ATP-dependent uptake of single-stranded DNA by duplex DNA, and the ATP-dependent hybridization of homologous single-stranded DNAs. It interacts with LexA causing its activation and leading to its autocatalytic cleavage. The polypeptide is Protein RecA (Herbaspirillum seropedicae).